Reading from the N-terminus, the 301-residue chain is MTAKTLIVLIGPTGVGKTELSLRIAEYFKTSIISSDSRQLYAELKIGTAAPTPEQLKRVPHYFVGTLQLTDYYSAAQYETEVMSVLEQLFQQHHVVLLTGGSMMYVDAICKGIDDIPTVDAETRELLLHKYDTEGLDNLCAELKLLDPEYYKIVDLKNPKRVIHALEICYMTGKTYTSFRTQQKKERPFHILKIGLTRDRAELYDRINRRVDQMMNEGLLEEARSVYAHRELNSLNTVGYKEIFKYLDGEWDLDFAIEKIKQNSRIYSRKQMTWFKRDEEIRWFHPEQEKEILSYLQASIK.

11-18 is a binding site for ATP; it reads GPTGVGKT. 13–18 serves as a coordination point for substrate; the sequence is TGVGKT. Positions 36 to 39 are interaction with substrate tRNA; sequence DSRQ.

It belongs to the IPP transferase family. Monomer. The cofactor is Mg(2+).

It catalyses the reaction adenosine(37) in tRNA + dimethylallyl diphosphate = N(6)-dimethylallyladenosine(37) in tRNA + diphosphate. Catalyzes the transfer of a dimethylallyl group onto the adenine at position 37 in tRNAs that read codons beginning with uridine, leading to the formation of N6-(dimethylallyl)adenosine (i(6)A). The polypeptide is tRNA dimethylallyltransferase 1 (Bacteroides fragilis (strain YCH46)).